Reading from the N-terminus, the 520-residue chain is Ribonuclease Y (520 aa).

The chain crosses the membrane as a helical span at residues 1–21 (MDIITIIIAVIAGIGGGFGIS). Positions 210–276 (CVSVFNIESD…RLALHKLVTD (67 aa)) constitute a KH domain. In terms of domain architecture, HD spans 336 to 429 (LLQHSREVSK…VQVCDAISGA (94 aa)).

This sequence belongs to the RNase Y family.

The protein resides in the cell membrane. Endoribonuclease that initiates mRNA decay. The chain is Ribonuclease Y from Flavobacterium psychrophilum (strain ATCC 49511 / DSM 21280 / CIP 103535 / JIP02/86).